We begin with the raw amino-acid sequence, 48 residues long: uncharacterized protein (48 aa).

It belongs to the ELIP/psbS family.

It is found in the plastid. Its subcellular location is the chloroplast. In terms of biological role, possible role in chlorophyll and/or carotenoid binding. This is an uncharacterized protein from Pyropia yezoensis (Susabi-nori).